The chain runs to 151 residues: Large ribosomal subunit protein eL19 (151 aa).

The tract at residues 62–93 (RLKERRKKRSLKSEGKKSGSRKGKKGARANSK) is disordered. Residues 79 to 88 (SGSRKGKKGA) are compositionally biased toward basic residues.

Belongs to the eukaryotic ribosomal protein eL19 family. Part of the 50S ribosomal subunit.

Its function is as follows. Binds to the 23S rRNA. The chain is Large ribosomal subunit protein eL19 from Saccharolobus solfataricus (strain ATCC 35092 / DSM 1617 / JCM 11322 / P2) (Sulfolobus solfataricus).